We begin with the raw amino-acid sequence, 258 residues long: MIEMISISAAFLLSLLCETCGLVLPKSSDLAIAASNYTIIKPDLSARLDPVKAPKARRKRYISQNDMIEIVEYHNQVRGKVFPPAANMEYMVWDDNLAKLAEAWAATCIWDHGPSYLLKFLGQNLSVRTGRYKSILQLVKPWYDEVKDYAFPYPQECNPRCPLRCYGPMCTHYTQMVWATTNRIGCAIHTCHNINVWGAVWRRAVYLVCNYSPKGNWIGEAPYTIGVPCSACPPSYGGSCSDNQCFPGITSNYLHWFK.

The signal sequence occupies residues 1–21 (MIEMISISAAFLLSLLCETCG). Positions 22–60 (LVLPKSSDLAIAASNYTIIKPDLSARLDPVKAPKARRKR) are excised as a propeptide. N-linked (GlcNAc...) asparagine glycans are attached at residues N36 and N124. Positions 71–211 (VEYHNQVRGK…RRAVYLVCNY (141 aa)) constitute an SCP domain.

It belongs to the CRISP family.

It localises to the secreted. Its function is as follows. Serine protease inhibitor which displays weak inhibitory activity against trypsin. May be involved in facial patterning during embryonic development. This is Peptidase inhibitor 15 (pi15) from Xenopus laevis (African clawed frog).